Reading from the N-terminus, the 67-residue chain is SGERPWKCCDLQTCTKSIPAFCRCRDLLEQCSDACKECGKVRDSDPPRYICQDVYRGIPAPMCHEHQ.

Disulfide bonds link Cys-8–Cys-63, Cys-9–Cys-24, Cys-14–Cys-22, Cys-31–Cys-38, and Cys-35–Cys-51.

The protein belongs to the Bowman-Birk serine protease inhibitor family.

In Setaria italica (Foxtail millet), this protein is Bowman-Birk type major trypsin inhibitor.